We begin with the raw amino-acid sequence, 417 residues long: Diphosphomevalonate decarboxylase 1 (417 aa).

Position 22–25 (22–25 (YWGK)) interacts with (R)-5-diphosphomevalonate. The Peroxisomal targeting signal PTS2 motif lies at 39 to 47 (RVSLDPDHL). (R)-5-diphosphomevalonate contacts are provided by residues Arg77, 160 to 165 (SGSACR), and Thr216.

This sequence belongs to the diphosphomevalonate decarboxylase family. As to quaternary structure, homodimer.

It localises to the peroxisome. The enzyme catalyses (R)-5-diphosphomevalonate + ATP = isopentenyl diphosphate + ADP + phosphate + CO2. It participates in isoprenoid biosynthesis; isopentenyl diphosphate biosynthesis via mevalonate pathway; isopentenyl diphosphate from (R)-mevalonate: step 3/3. Functionally, performs the first committed step in the biosynthesis of isoprene-containing compounds such as sterols and terpenoids. Component of the triterpene saponins (e.g. ginsenosides or panaxosides) and phytosterols biosynthetic pathways. Catalyzes the conversion of mevalonate diphosphate to isopentenyl diphosphate (IPP). The sequence is that of Diphosphomevalonate decarboxylase 1 from Panax ginseng (Korean ginseng).